The chain runs to 346 residues: tRNA N6-adenosine threonylcarbamoyltransferase (346 aa).

Fe cation is bound by residues histidine 111 and histidine 115. Substrate is bound by residues 134-138 (LVSGG), aspartate 167, glycine 180, and asparagine 277. Position 305 (aspartate 305) interacts with Fe cation.

This sequence belongs to the KAE1 / TsaD family. The cofactor is Fe(2+).

It localises to the cytoplasm. The catalysed reaction is L-threonylcarbamoyladenylate + adenosine(37) in tRNA = N(6)-L-threonylcarbamoyladenosine(37) in tRNA + AMP + H(+). Required for the formation of a threonylcarbamoyl group on adenosine at position 37 (t(6)A37) in tRNAs that read codons beginning with adenine. Is involved in the transfer of the threonylcarbamoyl moiety of threonylcarbamoyl-AMP (TC-AMP) to the N6 group of A37, together with TsaE and TsaB. TsaD likely plays a direct catalytic role in this reaction. The sequence is that of tRNA N6-adenosine threonylcarbamoyltransferase from Bordetella bronchiseptica (strain ATCC BAA-588 / NCTC 13252 / RB50) (Alcaligenes bronchisepticus).